Consider the following 796-residue polypeptide: Ent-copalyl diphosphate synthase 4 (796 aa).

The transit peptide at 1 to 23 (MSSSSIVTSLLRPTTAADGVLPR) directs the protein to the chloroplast. Residue Lys240 participates in substrate binding. Positions 371 and 373 each coordinate Mg(2+). A DXDD motif motif is present at residues 371–374 (DVDD). Lys457 lines the substrate pocket.

Belongs to the terpene synthase family. Tpsc subfamily. Mg(2+) is required as a cofactor. In terms of tissue distribution, highly expressed in leaves, and, at low levels, in stems, but barely in roots and flowers.

Its subcellular location is the plastid. It is found in the chloroplast. The enzyme catalyses (2E,6E,10E)-geranylgeranyl diphosphate = ent-copalyl diphosphate. Its pathway is secondary metabolite biosynthesis; terpenoid biosynthesis. Involved in the biosynthesis of ent-kaurene diterpenoids natural products such as oridonin, miltiradiene, eriocalyxin B and nezukol, known to exhibit antitumor, anti-inflammatory and antibacterial activities. Catalyzes the conversion of (2E,6E,10E)-geranylgeranyl diphosphate (GGPP) to ent-copalyl diphosphate (ent-CPP). The polypeptide is Ent-copalyl diphosphate synthase 4 (Isodon rubescens (Rabdosia rubescens)).